The sequence spans 783 residues: E3 UFM1-protein ligase 1 homolog (783 aa).

Positions 406–476 are disordered; sequence TLGTTHDADE…DAVQQSANSS (71 aa). Basic residues predominate over residues 446–457; it reads KSTKKHQRGRAA.

This sequence belongs to the UFL1 family.

In terms of biological role, E3 UFM1-protein ligase that mediates ufmylation of target proteins. This is E3 UFM1-protein ligase 1 homolog from Drosophila grimshawi (Hawaiian fruit fly).